Consider the following 213-residue polypeptide: UPF0502 protein Daro_2469 (213 aa).

This sequence belongs to the UPF0502 family.

In Dechloromonas aromatica (strain RCB), this protein is UPF0502 protein Daro_2469.